Here is a 462-residue protein sequence, read N- to C-terminus: MIYHDTIVALATPSGAGAIAVIRISGNNAITIASEVFQSVSGKDITKQKSHTLHLGHITDGTKVLDQVLLSIFKGTNSYTGENTIEISCHGSTYIQQQIIQLLLRKGCRMAQAGEFTLRSFLNGKMDLSQAEAVADLISSDNEAAHQIAMQQMRGGFSNEIAKLREELLNFASLIELELDFAEEDVEFADRTQFDDLLNRIEFVLKRLIDSFAVGNVIKNGIPVAIVGEPNVGKSTLLNTLLNEERAIVSEIAGTTRDTIEDELVIGGIGFRFIDTAGIRETKDVVESIGIKKTFEKIEQSQVVVFLFDSSEFKISGLKLKVALEKIKNQFPLKPLIIIGNKSDKLSETEIQNIKTEIPEILLISAKEKLGVEDLKNQLLSFVNTGALRNNQTIVTNTRHYDSLLKALDEIQKVKFGLQTNLPSDLMAIDIKQALYYFGEITGQVTNDELLGNIFANFCIGK.

3 residues coordinate (6S)-5-formyl-5,6,7,8-tetrahydrofolate: R23, E86, and K125. The TrmE-type G domain occupies 221–384; that stretch reads GIPVAIVGEP…LKNQLLSFVN (164 aa). N231 provides a ligand contact to K(+). Residues 231-236, 250-256, and 275-278 each bind GTP; these read NVGKST, SEIAGTT, and DTAG. S235 contributes to the Mg(2+) binding site. Residues S250, I252, and T255 each contribute to the K(+) site. T256 contributes to the Mg(2+) binding site. K462 contributes to the (6S)-5-formyl-5,6,7,8-tetrahydrofolate binding site.

Belongs to the TRAFAC class TrmE-Era-EngA-EngB-Septin-like GTPase superfamily. TrmE GTPase family. As to quaternary structure, homodimer. Heterotetramer of two MnmE and two MnmG subunits. The cofactor is K(+).

It is found in the cytoplasm. Exhibits a very high intrinsic GTPase hydrolysis rate. Involved in the addition of a carboxymethylaminomethyl (cmnm) group at the wobble position (U34) of certain tRNAs, forming tRNA-cmnm(5)s(2)U34. This is tRNA modification GTPase MnmE from Flavobacterium psychrophilum (strain ATCC 49511 / DSM 21280 / CIP 103535 / JIP02/86).